Here is a 380-residue protein sequence, read N- to C-terminus: Chaperone protein DnaJ (380 aa).

The region spanning 5–70 is the J domain; sequence DYYEVLGVER…SKRAAYDQYG (66 aa). The CR-type zinc-finger motif lies at 139 to 217; it reads GTNVNIRVPT…CHGEGRVEES (79 aa). Zn(2+)-binding residues include cysteine 152, cysteine 155, cysteine 169, cysteine 172, cysteine 191, cysteine 194, cysteine 205, and cysteine 208. CXXCXGXG motif repeat units follow at residues 152–159, 169–176, 191–198, and 205–212; these read CKPCDGSG, CPTCGGIG, CPRCHGHG, and CDSCHGEG. Residues 224-245 are disordered; sequence VPPGVDTGDRIRLSGEGEAGTQ.

The protein belongs to the DnaJ family. In terms of assembly, homodimer. The cofactor is Zn(2+).

Its subcellular location is the cytoplasm. In terms of biological role, participates actively in the response to hyperosmotic and heat shock by preventing the aggregation of stress-denatured proteins and by disaggregating proteins, also in an autonomous, DnaK-independent fashion. Unfolded proteins bind initially to DnaJ; upon interaction with the DnaJ-bound protein, DnaK hydrolyzes its bound ATP, resulting in the formation of a stable complex. GrpE releases ADP from DnaK; ATP binding to DnaK triggers the release of the substrate protein, thus completing the reaction cycle. Several rounds of ATP-dependent interactions between DnaJ, DnaK and GrpE are required for fully efficient folding. Also involved, together with DnaK and GrpE, in the DNA replication of plasmids through activation of initiation proteins. The sequence is that of Chaperone protein DnaJ from Pseudomonas syringae pv. syringae (strain B728a).